Here is a 366-residue protein sequence, read N- to C-terminus: Growth hormone secretagogue receptor type 1 (366 aa).

Over methionine 1–alanine 40 the chain is Extracellular. N-linked (GlcNAc...) asparagine glycans are attached at residues asparagine 13 and asparagine 27. The helical transmembrane segment at proline 41 to leucine 66 threads the bilayer. The Cytoplasmic portion of the chain corresponds to valine 67 to arginine 72. A helical transmembrane segment spans residues glutamate 73–methionine 96. Residues proline 97 to lysine 117 lie on the Extracellular side of the membrane. Cysteine 116 and cysteine 198 are disulfide-bonded. Residues leucine 118 to valine 139 traverse the membrane as a helical segment. The Cytoplasmic portion of the chain corresponds to glutamate 140–leucine 162. Residues valine 163–glycine 183 form a helical membrane-spanning segment. Topologically, residues valine 184 to threonine 211 are extracellular. The chain crosses the membrane as a helical span at residues valine 212–isoleucine 235. Residues glycine 236–lysine 263 lie on the Cytoplasmic side of the membrane. A helical transmembrane segment spans residues methionine 264–leucine 285. Over phenylalanine 286–glutamine 302 the chain is Extracellular. A helical transmembrane segment spans residues tyrosine 303–methionine 326. Over serine 327 to threonine 366 the chain is Cytoplasmic.

Belongs to the G-protein coupled receptor 1 family. As to expression, pituitary and hypothalamus.

The protein resides in the cell membrane. Functionally, receptor for ghrelin, coupled to G-alpha-11 proteins. Stimulates growth hormone secretion. Also binds other growth hormone releasing peptides (GHRP) (e.g. Met-enkephalin and GHRP-6) as well as non-peptide, low molecular weight secretagogues (e.g. L-692,429, MK-0677, adenosine). The protein is Growth hormone secretagogue receptor type 1 (GHSR) of Homo sapiens (Human).